Reading from the N-terminus, the 382-residue chain is Galactokinase (382 aa).

34–37 (EHTD) lines the substrate pocket. Residue 124–130 (GAGLSSS) coordinates ATP. Residues S130 and E162 each coordinate Mg(2+). The Proton acceptor role is filled by D174. Y223 lines the substrate pocket.

This sequence belongs to the GHMP kinase family. GalK subfamily.

It localises to the cytoplasm. The catalysed reaction is alpha-D-galactose + ATP = alpha-D-galactose 1-phosphate + ADP + H(+). It participates in carbohydrate metabolism; galactose metabolism. Catalyzes the transfer of the gamma-phosphate of ATP to D-galactose to form alpha-D-galactose-1-phosphate (Gal-1-P). This chain is Galactokinase, found in Shigella boydii serotype 18 (strain CDC 3083-94 / BS512).